A 115-amino-acid chain; its full sequence is MEVAAKLKYARISAQKARLVADQVRGLGAEQAVNLLRFSNKKAAALMKKVLNSAIANAEHNEGADIDELKVSTVMVDEGPSARRFHARARGRANQILKRTCHITVKVSDSQVEND.

This sequence belongs to the universal ribosomal protein uL22 family. In terms of assembly, part of the 50S ribosomal subunit.

In terms of biological role, this protein binds specifically to 23S rRNA; its binding is stimulated by other ribosomal proteins, e.g. L4, L17, and L20. It is important during the early stages of 50S assembly. It makes multiple contacts with different domains of the 23S rRNA in the assembled 50S subunit and ribosome. Its function is as follows. The globular domain of the protein is located near the polypeptide exit tunnel on the outside of the subunit, while an extended beta-hairpin is found that lines the wall of the exit tunnel in the center of the 70S ribosome. The sequence is that of Large ribosomal subunit protein uL22 from Coxiella burnetii (strain CbuK_Q154) (Coxiella burnetii (strain Q154)).